A 142-amino-acid chain; its full sequence is Putative pre-16S rRNA nuclease (142 aa).

This sequence belongs to the YqgF nuclease family.

Its subcellular location is the cytoplasm. Could be a nuclease involved in processing of the 5'-end of pre-16S rRNA. In Chlorobaculum tepidum (strain ATCC 49652 / DSM 12025 / NBRC 103806 / TLS) (Chlorobium tepidum), this protein is Putative pre-16S rRNA nuclease.